The following is a 537-amino-acid chain: MALFQLFSFLNVTLGLVSNIYNSTGHLSIDKACSGYSTEVFKGVCLPSYSYVKVDRHILTKDDRYYLGYAKATNREYQLYSLHIGTYDLFGSDIMSCGARGYALGLHNGDLELVLNYCRKVDGQKHIGEVFQSCRFVEYSEHMISGIVHSIPKDLMEEFSPIGKVPYFGIMPFRTECADQCSTKQAFYAMDAYPFYNIGYWFPLCADKYIPLCYSGRTDPCPLGYEERLIKVHSYMEGFESGMKTVCKSGEYIFPAWYSGQSEIYDTVVKPYIVNVPEYCGRFSRSDKSLVYSRFGFRGTIFSGLKVITLDGIDYLTTDFCVNYSMHHYVKPLVFERMRKSFICTSSGCLYKGFDVNHLHDICTPKLIVKRHEALISSFSFINTLGTKVGAVPYDFDGNIIQFIDVFSIDGFYVYSLSHKKIQTLTVMLVQSEEEWYMKLLHFVADDILRECLSTVFKVLFSAISACLSFIIDVGGCCFRQFIFVCLDSVILLLLLLPNYTHLTFILGFTLNAYIQLVYYESCCFRAYRDIAETIDL.

The first 15 residues, 1–15, serve as a signal peptide directing secretion; sequence MALFQLFSFLNVTLG. 2 consecutive transmembrane segments (helical) span residues 459 to 479 and 490 to 510; these read VLFSAISACLSFIIDVGGCCF and VILLLLLLPNYTHLTFILGFT.

Its subcellular location is the host membrane. This is an uncharacterized protein from Citrus sinensis (Sweet orange).